We begin with the raw amino-acid sequence, 398 residues long: S-adenosylmethionine synthase (398 aa).

His16 provides a ligand contact to ATP. Mg(2+) is bound at residue Asp18. Glu44 serves as a coordination point for K(+). L-methionine contacts are provided by Glu57 and Gln100. Positions 100-110 are flexible loop; it reads QSPDIAQGVNE. ATP is bound by residues 175–177, 242–243, Asp251, 257–258, Ala274, and Lys278; these read DAK, RF, and RK. An L-methionine-binding site is contributed by Asp251. Residue Lys282 participates in L-methionine binding.

It belongs to the AdoMet synthase family. Homotetramer; dimer of dimers. Requires Mg(2+) as cofactor. K(+) is required as a cofactor.

Its subcellular location is the cytoplasm. The enzyme catalyses L-methionine + ATP + H2O = S-adenosyl-L-methionine + phosphate + diphosphate. The protein operates within amino-acid biosynthesis; S-adenosyl-L-methionine biosynthesis; S-adenosyl-L-methionine from L-methionine: step 1/1. Functionally, catalyzes the formation of S-adenosylmethionine (AdoMet) from methionine and ATP. The overall synthetic reaction is composed of two sequential steps, AdoMet formation and the subsequent tripolyphosphate hydrolysis which occurs prior to release of AdoMet from the enzyme. The polypeptide is S-adenosylmethionine synthase (Streptococcus agalactiae serotype III (strain NEM316)).